The primary structure comprises 124 residues: Secretion system apparatus protein SsaP (124 aa).

This Salmonella typhi protein is Secretion system apparatus protein SsaP (ssaP).